The chain runs to 321 residues: MYSVNIEPDGSNHSPSRKRLKQILWGLMLVLSVTIYGSHAPLIYLCKVNGEIPFSSSAVVLLIELSKFVISLVFFLIQDWKSLKASVSWHLAAPYAVPAVLYGANNNLVVYIQHFMDPSSFQVLSNLKIVSTAVLYSLFLRQRLSVRRWLSVFLLLAAGVFYSYGGIQDLEKVSSDTNLYVTLPGLLLMLAYCLISGLSAVYTEMTLKTQKIPLNMQNLYLYSFGIIINLTAHLTSSKNSDFFDGFSVWVWVIILSQALNGLIMSLVMKLSNNITRLFIISFSMLANGFLSFILFQLQLTALFFLAVVLIGLAVYMYYGMK.

At 1–22 the chain is on the cytoplasmic side; the sequence is MYSVNIEPDGSNHSPSRKRLKQ. A helical membrane pass occupies residues 23-43; the sequence is ILWGLMLVLSVTIYGSHAPLI. The Lumenal portion of the chain corresponds to 44-56; that stretch reads YLCKVNGEIPFSS. Residues 57 to 77 form a helical membrane-spanning segment; the sequence is SAVVLLIELSKFVISLVFFLI. Over 78-91 the chain is Cytoplasmic; that stretch reads QDWKSLKASVSWHL. Residues 92 to 112 traverse the membrane as a helical segment; sequence AAPYAVPAVLYGANNNLVVYI. Residues 113 to 119 lie on the Lumenal side of the membrane; sequence QHFMDPS. Residues 120-140 traverse the membrane as a helical segment; sequence SFQVLSNLKIVSTAVLYSLFL. The Cytoplasmic segment spans residues 141-149; that stretch reads RQRLSVRRW. A helical membrane pass occupies residues 150–170; it reads LSVFLLLAAGVFYSYGGIQDL. Topologically, residues 171–180 are lumenal; sequence EKVSSDTNLY. A helical transmembrane segment spans residues 181-201; sequence VTLPGLLLMLAYCLISGLSAV. Topologically, residues 202–211 are cytoplasmic; sequence YTEMTLKTQK. Residues 212–232 form a helical membrane-spanning segment; that stretch reads IPLNMQNLYLYSFGIIINLTA. The Lumenal portion of the chain corresponds to 233 to 247; that stretch reads HLTSSKNSDFFDGFS. A helical membrane pass occupies residues 248 to 268; that stretch reads VWVWVIILSQALNGLIMSLVM. At 269-321 the chain is on the cytoplasmic side; sequence KLSNNITRLFIISFSMLANGFLSFILFQLQLTALFFLAVVLIGLAVYMYYGMK.

The protein belongs to the nucleotide-sugar transporter family. SLC35A subfamily.

It localises to the golgi apparatus membrane. The enzyme catalyses CDP-L-ribitol(in) + CDP(out) = CDP-L-ribitol(out) + CDP(in). In terms of biological role, mediates the transport of CDP-ribitol. Does not exhibit CMP-sialic acid, UDP-galactose and UDP-N-acetylglucosamine transport activity. The chain is Probable UDP-sugar transporter protein SLC35A4 from Xenopus tropicalis (Western clawed frog).